The sequence spans 208 residues: Octanoyltransferase (208 aa).

One can recognise a BPL/LPL catalytic domain in the interval 31–208 (GSEREMVWLL…LKKEFYKVFA (178 aa)). Substrate contacts are provided by residues 70–77 (RGGKYSYH), 142–144 (AFG), and 155–157 (GVA). The active-site Acyl-thioester intermediate is the Cys173.

Belongs to the LipB family.

It is found in the cytoplasm. It catalyses the reaction octanoyl-[ACP] + L-lysyl-[protein] = N(6)-octanoyl-L-lysyl-[protein] + holo-[ACP] + H(+). It functions in the pathway protein modification; protein lipoylation via endogenous pathway; protein N(6)-(lipoyl)lysine from octanoyl-[acyl-carrier-protein]: step 1/2. In terms of biological role, catalyzes the transfer of endogenously produced octanoic acid from octanoyl-acyl-carrier-protein onto the lipoyl domains of lipoate-dependent enzymes. Lipoyl-ACP can also act as a substrate although octanoyl-ACP is likely to be the physiological substrate. The sequence is that of Octanoyltransferase from Anaplasma phagocytophilum (strain HZ).